We begin with the raw amino-acid sequence, 161 residues long: MTATKPSPKSMLSLDLGKRRIGLAGCDPLGITVSPLPPLQRKSFERDLKVLQWHCTSRKVEGLVVGLPLDAKGLPTDQARHYERYGQRLARALKLPLALVNEHSSSWAAAERYNLQGDRSGQLDSAAAALLLEQWLREGPELKPVHVAAHPVSQVNSDSGS.

It belongs to the YqgF nuclease family.

It is found in the cytoplasm. Could be a nuclease involved in processing of the 5'-end of pre-16S rRNA. This Prochlorococcus marinus (strain MIT 9313) protein is Putative pre-16S rRNA nuclease.